A 481-amino-acid polypeptide reads, in one-letter code: MSAASLKVTTTSRPGSRLAVEVAVPAERSQASYEEAITRLSRSVNLPGFRKGKVPRTVLVQQLGALRIRATALESLVESVWRDALAQETIEALGQPELSGSFEELLDTFKPGEALTVTMETDVAPSPTLKSTKGLKAEAETVAFDAAKVDEMLEQSRRQLATVVPVEGRKAEQGDIAVVGFKGTYSDDGSEIEGGSADSMDVDLEHGRMIPGFVEGVVGMAVGDSKTVDCTFPEDYPKEDARGRKASFAIELKDLKTRELPELDDAFAKQASEQETLAELRSDLEQRLKDDAERRSRSNRHDALLAALVEQLEVELPESLIQQEVRNLVEQTAGQFAQQGMDVQSLFTPELVRNLMESSRPEAEERLRRSLALTALAESEKLSVDDADLNAKLKEVKGQLSGERDIDPERLRQAVLDDLLQEKLLGWLEENSTVTEKAPEAESDAAKASKPAAAKKDASKAKTAKTSKAKTAKAESESAES.

Positions 174-261 (GDIAVVGFKG…LKDLKTRELP (88 aa)) constitute a PPIase FKBP-type domain. A disordered region spans residues 430–481 (ENSTVTEKAPEAESDAAKASKPAAAKKDASKAKTAKTSKAKTAKAESESAES). Positions 437-447 (KAPEAESDAAK) are enriched in basic and acidic residues. Over residues 462–471 (KTAKTSKAKT) the composition is skewed to basic residues. Residues 472-481 (AKAESESAES) show a composition bias toward basic and acidic residues.

The protein belongs to the FKBP-type PPIase family. Tig subfamily.

It is found in the cytoplasm. The catalysed reaction is [protein]-peptidylproline (omega=180) = [protein]-peptidylproline (omega=0). Involved in protein export. Acts as a chaperone by maintaining the newly synthesized protein in an open conformation. Functions as a peptidyl-prolyl cis-trans isomerase. This Synechococcus sp. (strain WH7803) protein is Trigger factor.